The primary structure comprises 192 residues: uncharacterized protein (192 aa).

Residues 29-160 (HRQAAVLIPI…PLDIYRRGDS (132 aa)) form the Nudix hydrolase domain. Residues 67–89 (GAVDDTDASVIAAALREAEEEVA) carry the Nudix box motif. Positions 83 and 87 each coordinate Mg(2+).

Belongs to the Nudix hydrolase family. PCD1 subfamily. It depends on Mn(2+) as a cofactor. The cofactor is Mg(2+).

Functionally, probably mediates the hydrolysis of some nucleoside diphosphate derivatives. This is an uncharacterized protein from Shigella flexneri.